We begin with the raw amino-acid sequence, 146 residues long: Hemoglobin subunit beta (146 aa).

A Globin domain is found at 2 to 146 (HWSAEEKQLI…VAHALARKYH (145 aa)). Residues H63 and H92 each contribute to the heme b site.

Belongs to the globin family. Heterotetramer of two alpha chains and two beta chains. In terms of tissue distribution, red blood cells.

Functionally, involved in oxygen transport from the lung to the various peripheral tissues. The protein is Hemoglobin subunit beta (HBB) of Phasianus colchicus colchicus (Black-necked pheasant).